The following is a 157-amino-acid chain: Transcription elongation factor GreA (157 aa).

It belongs to the GreA/GreB family.

Functionally, necessary for efficient RNA polymerase transcription elongation past template-encoded arresting sites. The arresting sites in DNA have the property of trapping a certain fraction of elongating RNA polymerases that pass through, resulting in locked ternary complexes. Cleavage of the nascent transcript by cleavage factors such as GreA or GreB allows the resumption of elongation from the new 3'terminus. GreA releases sequences of 2 to 3 nucleotides. This Bartonella tribocorum (strain CIP 105476 / IBS 506) protein is Transcription elongation factor GreA.